A 129-amino-acid polypeptide reads, in one-letter code: Phosphoribosyl-AMP cyclohydrolase (129 aa).

Aspartate 79 contacts Mg(2+). Zn(2+) is bound at residue cysteine 80. 2 residues coordinate Mg(2+): aspartate 81 and aspartate 83. Zn(2+) is bound by residues cysteine 96 and cysteine 103.

Belongs to the PRA-CH family. In terms of assembly, homodimer. Requires Mg(2+) as cofactor. Zn(2+) is required as a cofactor.

The protein localises to the cytoplasm. The enzyme catalyses 1-(5-phospho-beta-D-ribosyl)-5'-AMP + H2O = 1-(5-phospho-beta-D-ribosyl)-5-[(5-phospho-beta-D-ribosylamino)methylideneamino]imidazole-4-carboxamide. Its pathway is amino-acid biosynthesis; L-histidine biosynthesis; L-histidine from 5-phospho-alpha-D-ribose 1-diphosphate: step 3/9. Functionally, catalyzes the hydrolysis of the adenine ring of phosphoribosyl-AMP. The chain is Phosphoribosyl-AMP cyclohydrolase from Magnetococcus marinus (strain ATCC BAA-1437 / JCM 17883 / MC-1).